Consider the following 418-residue polypeptide: Exodeoxyribonuclease 7 large subunit (418 aa).

This sequence belongs to the XseA family. In terms of assembly, heterooligomer composed of large and small subunits.

The protein resides in the cytoplasm. It carries out the reaction Exonucleolytic cleavage in either 5'- to 3'- or 3'- to 5'-direction to yield nucleoside 5'-phosphates.. Bidirectionally degrades single-stranded DNA into large acid-insoluble oligonucleotides, which are then degraded further into small acid-soluble oligonucleotides. This Acaryochloris marina (strain MBIC 11017) protein is Exodeoxyribonuclease 7 large subunit.